We begin with the raw amino-acid sequence, 367 residues long: Protein-glutamate methylesterase/protein-glutamine glutaminase 2 (367 aa).

Residues Ser3 to Asp120 form the Response regulatory domain. Asp54 bears the 4-aspartylphosphate mark. Positions Arg132–Ala174 are disordered. Positions Ala143–Ala174 are enriched in low complexity. The region spanning Ser175–Lys367 is the CheB-type methylesterase domain. Active-site residues include Ser187, His214, and Asp310.

The protein belongs to the CheB family. In terms of processing, phosphorylated by CheA. Phosphorylation of the N-terminal regulatory domain activates the methylesterase activity.

It localises to the cytoplasm. It carries out the reaction [protein]-L-glutamate 5-O-methyl ester + H2O = L-glutamyl-[protein] + methanol + H(+). The catalysed reaction is L-glutaminyl-[protein] + H2O = L-glutamyl-[protein] + NH4(+). Functionally, involved in chemotaxis. Part of a chemotaxis signal transduction system that modulates chemotaxis in response to various stimuli. Catalyzes the demethylation of specific methylglutamate residues introduced into the chemoreceptors (methyl-accepting chemotaxis proteins or MCP) by CheR. Also mediates the irreversible deamidation of specific glutamine residues to glutamic acid. In Nitratidesulfovibrio vulgaris (strain ATCC 29579 / DSM 644 / CCUG 34227 / NCIMB 8303 / VKM B-1760 / Hildenborough) (Desulfovibrio vulgaris), this protein is Protein-glutamate methylesterase/protein-glutamine glutaminase 2.